We begin with the raw amino-acid sequence, 345 residues long: tRNA N6-adenosine threonylcarbamoyltransferase (345 aa).

Fe cation-binding residues include His109 and His113. Substrate contacts are provided by residues 136 to 140, Asp169, Gly182, Asp186, and Asn284; that span reads TVSGG. Asp312 contributes to the Fe cation binding site.

Belongs to the KAE1 / TsaD family. It depends on Fe(2+) as a cofactor.

The protein localises to the cytoplasm. It catalyses the reaction L-threonylcarbamoyladenylate + adenosine(37) in tRNA = N(6)-L-threonylcarbamoyladenosine(37) in tRNA + AMP + H(+). In terms of biological role, required for the formation of a threonylcarbamoyl group on adenosine at position 37 (t(6)A37) in tRNAs that read codons beginning with adenine. Is involved in the transfer of the threonylcarbamoyl moiety of threonylcarbamoyl-AMP (TC-AMP) to the N6 group of A37, together with TsaE and TsaB. TsaD likely plays a direct catalytic role in this reaction. The protein is tRNA N6-adenosine threonylcarbamoyltransferase of Chlorobium phaeovibrioides (strain DSM 265 / 1930) (Prosthecochloris vibrioformis (strain DSM 265)).